The sequence spans 370 residues: Notoamide biosynthesis cluster protein J (370 aa).

The signal sequence occupies residues 1–22 (MRIMSIMLHLLATILLSSAVSA). N-linked (GlcNAc...) asparagine glycosylation is found at asparagine 159, asparagine 167, asparagine 192, asparagine 235, asparagine 282, asparagine 340, and asparagine 346.

Part of the gene cluster that mediates the biosynthesis of notoamide, a fungal indole alkaloid that belongs to a family of natural products containing a characteristic bicyclo[2.2.2]diazaoctane core. The first step of notoamide biosynthesis involves coupling of L-proline and L-tryptophan by the bimodular NRPS notE, to produce cyclo-L-tryptophan-L-proline called brevianamide F. The reverse prenyltransferase notF then acts as a deoxybrevianamide E synthase and converts brevianamide F to deoxybrevianamide E via reverse prenylation at C-2 of the indole ring leading to the bicyclo[2.2.2]diazaoctane core. Deoxybrevianamide E is further hydroxylated at C-6 of the indole ring, likely catalyzed by the cytochrome P450 monooxygenase notG, to yield 6-hydroxy-deoxybrevianamide E. 6-hydroxy-deoxybrevianamide E is a specific substrate of the prenyltransferase notC for normal prenylation at C-7 to produce 6-hydroxy-7-prenyl-deoxybrevianamide, also called notoamide S. As the proposed pivotal branching point in notoamide biosynthesis, notoamide S can be diverted to notoamide E through an oxidative pyran ring closure putatively catalyzed by either notH cytochrome P450 monooxygenase or the notD FAD-linked oxidoreductase. This step would be followed by an indole 2,3-epoxidation-initiated pinacol-like rearrangement catalyzed by the notB FAD-dependent monooxygenase leading to the formation of notoamide C and notoamide D. On the other hand notoamide S is converted to notoamide T by notH (or notD), a bifunctional oxidase that also functions as the intramolecular Diels-Alderase responsible for generation of (+)-notoamide T. To generate antipodal (-)-notoaminide T, notH' (or notD') in Aspergillus versicolor is expected to catalyze a Diels-Alder reaction leading to the opposite stereochemistry. The remaining oxidoreductase notD (or notH) likely catalyzes the oxidative pyran ring formation to yield (+)-stephacidin A. The FAD-dependent monooxygenase notI is highly similar to notB and is predicted to catalyze a similar conversion from (+)-stephacidin A to (-)-notoamide B via the 2,3-epoxidation of (+)-stephacidin A followed by a pinacol-type rearrangement. Finally, it remains unclear which enzyme could be responsible for the final hydroxylation steps leading to notoamide A and sclerotiamide. The function of notJ in the notoamide biosynthesis has not been determined yet. The polypeptide is Notoamide biosynthesis cluster protein J (Aspergillus sp. (strain MF297-2)).